The following is a 276-amino-acid chain: Bis(5'-nucleosyl)-tetraphosphatase, symmetrical (276 aa).

The protein belongs to the Ap4A hydrolase family.

It carries out the reaction P(1),P(4)-bis(5'-adenosyl) tetraphosphate + H2O = 2 ADP + 2 H(+). Its function is as follows. Hydrolyzes diadenosine 5',5'''-P1,P4-tetraphosphate to yield ADP. In Neisseria gonorrhoeae (strain ATCC 700825 / FA 1090), this protein is Bis(5'-nucleosyl)-tetraphosphatase, symmetrical.